Reading from the N-terminus, the 303-residue chain is UPF0282 protein PAE3680 (303 aa).

Belongs to the UPF0282 family.

In Pyrobaculum aerophilum (strain ATCC 51768 / DSM 7523 / JCM 9630 / CIP 104966 / NBRC 100827 / IM2), this protein is UPF0282 protein PAE3680.